Here is a 390-residue protein sequence, read N- to C-terminus: Chalcone synthase (390 aa).

Cys-164 is an active-site residue.

It belongs to the thiolase-like superfamily. Chalcone/stilbene synthases family.

The catalysed reaction is (E)-4-coumaroyl-CoA + 3 malonyl-CoA + 3 H(+) = 2',4,4',6'-tetrahydroxychalcone + 3 CO2 + 4 CoA. The protein operates within secondary metabolite biosynthesis; flavonoid biosynthesis. The primary product of this enzyme is 4,2',4',6'-tetrahydroxychalcone (also termed naringenin-chalcone or chalcone) which can under specific conditions spontaneously isomerize into naringenin. The sequence is that of Chalcone synthase (CHS) from Onobrychis viciifolia (Common sainfoin).